The following is a 557-amino-acid chain: Anti-Muellerian hormone type-2 receptor (557 aa).

Residues 1 to 17 (MLGTLGLWTLLPAAAQV) form the signal peptide. Over 18–144 (SPNRRTCVFF…QEPQATPGGP (127 aa)) the chain is Extracellular. 2 cysteine pairs are disulfide-bonded: Cys-55–Cys-79 and Cys-92–Cys-109. The N-linked (GlcNAc...) asparagine glycan is linked to Asn-66. An N-linked (GlcNAc...) asparagine glycan is attached at Asn-119. The helical transmembrane segment at 145 to 165 (IWMAQLLLGVFLVLLLSIIIL) threads the bilayer. Residues 166-557 (ALLQRKACRV…SVQQGSGSKS (392 aa)) are Cytoplasmic-facing. Positions 201-511 (LRFSQVIQEG…RLAALAYPQV (311 aa)) constitute a Protein kinase domain. Residues 207-215 (IQEGGHAVV) and Lys-228 contribute to the ATP site. The active-site Proton acceptor is Asp-331.

The protein belongs to the protein kinase superfamily. TKL Ser/Thr protein kinase family. TGFB receptor subfamily. In terms of assembly, interacts with type I receptor ACVR1. Requires Mg(2+) as cofactor. Mn(2+) serves as cofactor.

It is found in the membrane. The catalysed reaction is L-threonyl-[receptor-protein] + ATP = O-phospho-L-threonyl-[receptor-protein] + ADP + H(+). The enzyme catalyses L-seryl-[receptor-protein] + ATP = O-phospho-L-seryl-[receptor-protein] + ADP + H(+). Its function is as follows. On ligand binding, forms a receptor complex consisting of two type II and two type I transmembrane serine/threonine kinases. Type II receptors phosphorylate and activate type I receptors which autophosphorylate, then bind and activate SMAD transcriptional regulators. Receptor for anti-Muellerian hormone. The polypeptide is Anti-Muellerian hormone type-2 receptor (Amhr2) (Rattus norvegicus (Rat)).